The chain runs to 109 residues: Mitochondrial import receptor subunit TOM22 homolog (109 aa).

The Cytoplasmic portion of the chain corresponds to 1 to 60 (MALVRDDFDDIPDSEIHETIVERIEGLGEMFPDALRSAVHSTVDWSIWGVKGVFSLTKST). Residues 61-77 (IWVVSTTSLIAFLPYII) traverse the membrane as a helical segment. Residues 78–109 (EKERSDLEKTQVAQQRQMLLGPSAAIQQAKTA) lie on the Mitochondrial intermembrane side of the membrane.

It belongs to the Tom22 family. In terms of assembly, forms part of the preprotein translocase complex of the outer mitochondrial membrane (TOM complex).

The protein resides in the mitochondrion outer membrane. In terms of biological role, central receptor component of the translocase of the outer membrane of mitochondria (TOM complex) responsible for the recognition and translocation of cytosolically synthesized mitochondrial preproteins. Together with the peripheral receptor tomm-20 functions as the transit peptide receptor and facilitates the movement of preproteins into the translocation pore. The sequence is that of Mitochondrial import receptor subunit TOM22 homolog from Caenorhabditis elegans.